A 260-amino-acid chain; its full sequence is tRNA pseudouridine synthase C (260 aa).

Aspartate 54 is an active-site residue.

Belongs to the pseudouridine synthase RluA family.

It catalyses the reaction uridine(65) in tRNA = pseudouridine(65) in tRNA. Functionally, responsible for synthesis of pseudouridine from uracil-65 in transfer RNAs. The polypeptide is tRNA pseudouridine synthase C (truC) (Salmonella typhimurium (strain LT2 / SGSC1412 / ATCC 700720)).